A 614-amino-acid polypeptide reads, in one-letter code: Dihydroxy-acid dehydratase (614 aa).

Residue aspartate 81 coordinates Mg(2+). Cysteine 122 contributes to the [2Fe-2S] cluster binding site. Positions 123 and 124 each coordinate Mg(2+). Residue lysine 124 is modified to N6-carboxylysine. Cysteine 193 contributes to the [2Fe-2S] cluster binding site. Glutamate 489 lines the Mg(2+) pocket. Catalysis depends on serine 515, which acts as the Proton acceptor.

It belongs to the IlvD/Edd family. Homodimer. [2Fe-2S] cluster serves as cofactor. Requires Mg(2+) as cofactor.

The catalysed reaction is (2R)-2,3-dihydroxy-3-methylbutanoate = 3-methyl-2-oxobutanoate + H2O. It catalyses the reaction (2R,3R)-2,3-dihydroxy-3-methylpentanoate = (S)-3-methyl-2-oxopentanoate + H2O. The protein operates within amino-acid biosynthesis; L-isoleucine biosynthesis; L-isoleucine from 2-oxobutanoate: step 3/4. It functions in the pathway amino-acid biosynthesis; L-valine biosynthesis; L-valine from pyruvate: step 3/4. In terms of biological role, functions in the biosynthesis of branched-chain amino acids. Catalyzes the dehydration of (2R,3R)-2,3-dihydroxy-3-methylpentanoate (2,3-dihydroxy-3-methylvalerate) into 2-oxo-3-methylpentanoate (2-oxo-3-methylvalerate) and of (2R)-2,3-dihydroxy-3-methylbutanoate (2,3-dihydroxyisovalerate) into 2-oxo-3-methylbutanoate (2-oxoisovalerate), the penultimate precursor to L-isoleucine and L-valine, respectively. This Cellvibrio japonicus (strain Ueda107) (Pseudomonas fluorescens subsp. cellulosa) protein is Dihydroxy-acid dehydratase.